The following is a 560-amino-acid chain: Protein DA1-related 7 (560 aa).

3 consecutive UIM domains span residues 43 to 62 (SEAD…QETS), 92 to 111 (EEDQ…KGKS), and 155 to 174 (NEDA…KGQI). In terms of domain architecture, LIM zinc-binding spans 199 to 269 (SICDGCKSAI…HVCKKKFPGR (71 aa)).

Interacts with ubiquitin.

Ubiquitin receptor that probably regulates developmental process. This Arabidopsis thaliana (Mouse-ear cress) protein is Protein DA1-related 7 (DAR7).